Reading from the N-terminus, the 1136-residue chain is EYTIVRYVDPLTGATQDENPLMAIDLVQEYFAKIRSQLVSEEKLETQNIIANPGIQAYYMKNRGDAALKVDLTPHNPLLVTKTGTIAGFPENEFILRQTGKAVNVKMSEVPVENELEEVEHEGKNLNRGLRDYNVVSNVVCRLTNESDGHSASLFGLGYGGYIITNRHLFKNNNGTLKVQSQHGDFIVKNTTQLKMVPVGKTDILIIRMPKDFPVLPQKLRFRAPANEDKVCLIASNFQERYVSSLVSETSSVYPVGNGEFWQHWISTKDGHCGLPLTSTKDGFIVGIHSLSTITNSKNFFASIPANFEEQYLAKLDQQDWTANWKYNPNEVSWNGLRLQENKPGRIFQAVKEVSALFSDAVYEQGQEVGWLFRELKDNLKAVAVLPNQLVTKHVVKGPCQCFIQYLNESPEASAFFKPLMGQYGKSILSKEAFVKDIMKYSKPIVLGEVDFIKFEEGYNNVLRMFHDIGFEKCEYVTDSMEVYKNLNLKAAVGAMYTGKKQQYFEGMSEDEIHQLVIASCFRLWSGKFGVWNGSLKAELRPLEKVQACKTRTFTAAPLDTLLGAKVCVDDFNAQFYDKHLTAPWTVGICKYYKGWDTFMNKLPEGWLYCDADGSQFDSSLTPFLINSVLRLRLEFMEDWDIGARMLSNLYTEIIYTPIATPDGTVVKKFRGNNSGQPSTVVDNTLMVVLAMNYALAKLSIPYEEMDSRIRYFANGDDLLVAVEPTKGGEILDSLQASFSELGLIYDFNDRTFDKTQLSFMSHQALWDGDMFIPKIKQERVVSILEWDRSTQPEHRIEAVCAAMIEAWGYPELLQEIRKFYAFMVTQEPYSAIHAQGKTRYISERALVTLYKDEKVVLSDIGPYIQKLAEMSLGCVDEVVMHQADSMDAGGSSRPPAPLVRQQDQDVNVGTFSVARVKALSDKMMLPKVRGKTVLNLQHLVQYNPEQTEISNTRATRTQFNNWYDRVRDSYGVTDDQMAVILNGLMVWCIENGTSPNLNGNWTMMDGDEQIEYPLQPVLENAQPTFRQIMAHFSNAAEAYIEKRNSEQRYMPRYGSQRNLNDYSLARYAFDFYEMTSRTANRAREAHIQMKAAALRNTKTKLFGLDGKVGTEEEDTERHVASDVNRNMHSLLGVNM.

Residues 123 to 341 (GKNLNRGLRD…VSWNGLRLQE (219 aa)) enclose the Peptidase C4 domain. Active-site for nuclear inclusion protein A activity residues include His168, Asp203, and Cys273. The RdRp catalytic domain maps to 607–731 (WLYCDADGSQ…AVEPTKGGEI (125 aa)).

It belongs to the potyviridae genome polyprotein family. As to quaternary structure, interacts with host eIF4E protein (via cap-binding region); this interaction mediates the translation of the VPg-viral RNA conjugates. Part of a complex that comprises VPg, RNA, host EIF4E and EIF4G; this interaction mediates the translation of the VPg-viral RNA conjugates. In terms of processing, VPg is uridylylated by the polymerase and is covalently attached to the 5'-end of the genomic RNA. This uridylylated form acts as a nucleotide-peptide primer for the polymerase. Genome polyprotein of potyviruses undergoes post-translational proteolytic processing by the main proteinase NIa-pro resulting in the production of at least ten individual proteins. The P1 proteinase and the HC-pro cleave only their respective C-termini autocatalytically. 6K1 is essential for proper proteolytic separation of P3 from CI.

It is found in the host nucleus. The protein localises to the virion. The catalysed reaction is Hydrolyzes glutaminyl bonds, and activity is further restricted by preferences for the amino acids in P6 - P1' that vary with the species of potyvirus, e.g. Glu-Xaa-Xaa-Tyr-Xaa-Gln-|-(Ser or Gly) for the enzyme from tobacco etch virus. The natural substrate is the viral polyprotein, but other proteins and oligopeptides containing the appropriate consensus sequence are also cleaved.. The enzyme catalyses RNA(n) + a ribonucleoside 5'-triphosphate = RNA(n+1) + diphosphate. Its function is as follows. Mediates the cap-independent, EIF4E-dependent translation of viral genomic RNAs. Binds to the cap-binding site of host EIF4E and thus interferes with the host EIF4E-dependent mRNA export and translation. VPg-RNA directly binds EIF4E and is a template for transcription. Also forms trimeric complexes with EIF4E-EIF4G, which are templates for translation. In terms of biological role, has RNA-binding and proteolytic activities. An RNA-dependent RNA polymerase that plays an essential role in the virus replication. Functionally, involved in aphid transmission, cell-to-cell and systemis movement, encapsidation of the viral RNA and in the regulation of viral RNA amplification. This is Genome polyprotein from Ornithogalum mosaic virus.